The primary structure comprises 42 residues: Profilin (42 aa).

It belongs to the profilin family. Occurs in many kinds of cells as a complex with monomeric actin in a 1:1 ratio.

It localises to the cytoplasm. Its subcellular location is the cytoskeleton. Binds to actin and affects the structure of the cytoskeleton. At high concentrations, profilin prevents the polymerization of actin, whereas it enhances it at low concentrations. This chain is Profilin, found in Plantago lanceolata (English plantain).